A 102-amino-acid polypeptide reads, in one-letter code: Small ribosomal subunit protein uS10 (102 aa).

Belongs to the universal ribosomal protein uS10 family. Part of the 30S ribosomal subunit.

Involved in the binding of tRNA to the ribosomes. This is Small ribosomal subunit protein uS10 from Leptospira borgpetersenii serovar Hardjo-bovis (strain JB197).